The chain runs to 466 residues: Ankyrin repeat and SOCS box protein 18 (466 aa).

6 ANK repeats span residues 119 to 148 (ELTT…DPDA), 151 to 180 (GGRG…DPDL), 184 to 213 (EGLA…SVQR), 218 to 247 (GRDT…HVDA), 251 to 288 (RGET…EADA), and 292 to 321 (DERS…DAGA). The SOCS box domain maps to 405-463 (QMHKPFYQSLFALALTPRCLQHLCRCALRRLFGKRCFDLIPLLPLPKPLQNYLLLEPQG).

The protein belongs to the ankyrin SOCS box (ASB) family.

It participates in protein modification; protein ubiquitination. In terms of biological role, may be a substrate-recognition component of a SCF-like ECS (Elongin-Cullin-SOCS-box protein) E3 ubiquitin-protein ligase complex which mediates the ubiquitination and subsequent proteasomal degradation of target proteins. This is Ankyrin repeat and SOCS box protein 18 (ASB18) from Homo sapiens (Human).